Here is an 82-residue protein sequence, read N- to C-terminus: MAEYLASIFGTEKDKVNCSFYFKIGACRHGDRCSRLHNKPTFSQTIVLLNLYRNPQNTAQTADGSHCHVSDVEVQEHYDNFF.

N-acetylalanine is present on alanine 2. The C3H1-type zinc-finger motif lies at 12-40; sequence EKDKVNCSFYFKIGACRHGDRCSRLHNKP. At lysine 39 the chain carries N6-methyllysine. In terms of domain architecture, RRM spans 65-82; the sequence is SHCHVSDVEVQEHYDNFF.

It belongs to the splicing factor SR family. Identified in the spliceosome C complex. Heterodimer with U2AF2. Interacts (via RS domain) with PHF5A (via N-terminus). Interacts with ZRANB2. Interacts with SDE2. Interacts with SF3B1.

It is found in the nucleus. The protein localises to the nucleus speckle. In terms of biological role, plays a critical role in both constitutive and enhancer-dependent splicing by mediating protein-protein interactions and protein-RNA interactions required for accurate 3'-splice site selection. Recruits U2 snRNP to the branch point. Directly mediates interactions between U2AF2 and proteins bound to the enhancers and thus may function as a bridge between U2AF2 and the enhancer complex to recruit it to the adjacent intron. The protein is Splicing factor U2AF 35 kDa subunit (U2AF1) of Sus scrofa (Pig).